Here is a 75-residue protein sequence, read N- to C-terminus: Small ribosomal subunit protein bS18 (75 aa).

This sequence belongs to the bacterial ribosomal protein bS18 family. Part of the 30S ribosomal subunit. Forms a tight heterodimer with protein bS6.

Its function is as follows. Binds as a heterodimer with protein bS6 to the central domain of the 16S rRNA, where it helps stabilize the platform of the 30S subunit. This is Small ribosomal subunit protein bS18 from Shewanella halifaxensis (strain HAW-EB4).